The primary structure comprises 350 residues: Biotin synthase (350 aa).

The Radical SAM core domain maps to 63-281 (GDIELATLLS…IAVARITMPK (219 aa)). 3 residues coordinate [4Fe-4S] cluster: Cys-78, Cys-82, and Cys-85. Residues Cys-122, Cys-153, Cys-213, and Arg-285 each contribute to the [2Fe-2S] cluster site.

Belongs to the radical SAM superfamily. Biotin synthase family. In terms of assembly, homodimer. Requires [4Fe-4S] cluster as cofactor. The cofactor is [2Fe-2S] cluster.

The catalysed reaction is (4R,5S)-dethiobiotin + (sulfur carrier)-SH + 2 reduced [2Fe-2S]-[ferredoxin] + 2 S-adenosyl-L-methionine = (sulfur carrier)-H + biotin + 2 5'-deoxyadenosine + 2 L-methionine + 2 oxidized [2Fe-2S]-[ferredoxin]. Its pathway is cofactor biosynthesis; biotin biosynthesis; biotin from 7,8-diaminononanoate: step 2/2. In terms of biological role, catalyzes the conversion of dethiobiotin (DTB) to biotin by the insertion of a sulfur atom into dethiobiotin via a radical-based mechanism. This is Biotin synthase from Acidovorax ebreus (strain TPSY) (Diaphorobacter sp. (strain TPSY)).